The sequence spans 441 residues: Gluconate 2-dehydrogenase cytochrome c subunit (441 aa).

Residues 1 to 19 (MMKSILALVLGTLSFAALA) form the signal peptide. Cytochrome c domains follow at residues 26–129 (ALVK…MHGV), 173–289 (PVLA…KSLG), and 312–403 (DDSQ…RGSW). Heme c contacts are provided by Cys-40, Cys-43, His-44, Cys-188, Cys-191, His-192, Cys-325, Cys-328, and His-329.

Heterotrimer. The cofactor is FAD. Binds 3 heme c groupd covalently per subunit.

Its subcellular location is the cell membrane. The catalysed reaction is D-gluconate + A = 2-dehydro-D-gluconate + AH2. Part of the heterotrimer that catalyzes the conversion of D-gluconate to 2-dehydro-D-gluconate. The protein is Gluconate 2-dehydrogenase cytochrome c subunit of Pantoea cypripedii (Pectobacterium cypripedii).